The following is a 149-amino-acid chain: Large ribosomal subunit protein eL19 (149 aa).

Positions 55 to 69 (KGISSARKKEVQEQK) are enriched in basic and acidic residues. A disordered region spans residues 55 to 93 (KGISSARKKEVQEQKRKGKRKGPGSRRGAKGARTPKKEK). Residues 70-88 (RKGKRKGPGSRRGAKGART) are compositionally biased toward basic residues.

It belongs to the eukaryotic ribosomal protein eL19 family. In terms of assembly, part of the 50S ribosomal subunit.

Its function is as follows. Binds to the 23S rRNA. This Methanococcus vannielii protein is Large ribosomal subunit protein eL19.